Consider the following 312-residue polypeptide: Ribosomal RNA small subunit methyltransferase H (312 aa).

S-adenosyl-L-methionine contacts are provided by residues 35 to 37 (GGH), Asp-55, Phe-79, Asp-101, and Gln-108.

Belongs to the methyltransferase superfamily. RsmH family.

It is found in the cytoplasm. The catalysed reaction is cytidine(1402) in 16S rRNA + S-adenosyl-L-methionine = N(4)-methylcytidine(1402) in 16S rRNA + S-adenosyl-L-homocysteine + H(+). In terms of biological role, specifically methylates the N4 position of cytidine in position 1402 (C1402) of 16S rRNA. This is Ribosomal RNA small subunit methyltransferase H from Buchnera aphidicola subsp. Acyrthosiphon pisum (strain APS) (Acyrthosiphon pisum symbiotic bacterium).